The chain runs to 139 residues: ATP synthase epsilon chain (139 aa).

The protein belongs to the ATPase epsilon chain family. In terms of assembly, F-type ATPases have 2 components, CF(1) - the catalytic core - and CF(0) - the membrane proton channel. CF(1) has five subunits: alpha(3), beta(3), gamma(1), delta(1), epsilon(1). CF(0) has three main subunits: a, b and c.

It is found in the cell inner membrane. Functionally, produces ATP from ADP in the presence of a proton gradient across the membrane. The protein is ATP synthase epsilon chain of Shigella boydii serotype 18 (strain CDC 3083-94 / BS512).